The sequence spans 85 residues: U4-theraphotoxin-Hhn1a (85 aa).

The N-terminal stretch at 1–22 (MKVTLIVILTCAAVLVLHTTAA) is a signal peptide. A propeptide spanning residues 23 to 48 (EELEAESQLMEVGMPDTELAAVDEER) is cleaved from the precursor. 3 disulfide bridges follow: C52–C66, C56–C77, and C71–C82.

Belongs to the neurotoxin 12 (Hwtx-2) family. 02 (Hwtx-2) subfamily. In terms of assembly, monomer. Expressed by the venom gland.

It is found in the secreted. Its function is as follows. Neurotoxin active on both insects and mammals. The chain is U4-theraphotoxin-Hhn1a from Cyriopagopus hainanus (Chinese bird spider).